A 142-amino-acid chain; its full sequence is Ribosome maturation factor RimP (142 aa).

This sequence belongs to the RimP family.

Its subcellular location is the cytoplasm. Functionally, required for maturation of 30S ribosomal subunits. The sequence is that of Ribosome maturation factor RimP from Nitrosospira multiformis (strain ATCC 25196 / NCIMB 11849 / C 71).